Reading from the N-terminus, the 462-residue chain is uncharacterized protein (462 aa).

Residues 12–70 (MLKKNDIIQVAISDLSHEGAGVAKHDGFVFFVDNALPEEVIDMRVLKVNKNSGFGKVEA) form the TRAM domain. Residues Gln-294, Tyr-323, Glu-344, and Asp-392 each coordinate S-adenosyl-L-methionine. The active-site Nucleophile is Cys-419.

This sequence belongs to the class I-like SAM-binding methyltransferase superfamily. RNA M5U methyltransferase family.

This is an uncharacterized protein from Streptococcus pyogenes serotype M18 (strain MGAS8232).